Consider the following 509-residue polypeptide: Glucose-1-phosphate adenylyltransferase large subunit 4, chloroplastic/amyloplastic (509 aa).

The N-terminal 36 residues, 1-36 (MATCSWAATTAAAAPPRPPARCRSRVAALRRTAAAS), are a transit peptide targeting the chloroplast.

The protein belongs to the bacterial/plant glucose-1-phosphate adenylyltransferase family. As to quaternary structure, heterotetramer composed of two small and two large subunits. Expressed in leaves and stems.

The protein resides in the plastid. It is found in the chloroplast. The enzyme catalyses alpha-D-glucose 1-phosphate + ATP + H(+) = ADP-alpha-D-glucose + diphosphate. It participates in glycan biosynthesis; starch biosynthesis. Activated by 3'phosphoglycerate, inhibited by orthophosphate. Allosteric regulation. In terms of biological role, involved in synthesis of starch. Catalyzes the synthesis of ADP-glucose, a molecule that serves as an activated glycosyl donor for alpha-1,4-glucan synthesis. Essential for starch synthesis in leaf chloroplasts. This is Glucose-1-phosphate adenylyltransferase large subunit 4, chloroplastic/amyloplastic from Oryza sativa subsp. japonica (Rice).